Consider the following 189-residue polypeptide: Glycerol-3-phosphate acyltransferase (189 aa).

The next 4 helical transmembrane spans lie at 1 to 21, 79 to 99, 113 to 133, and 151 to 171; these read MVWL…AILL, QQAW…YFNF, LGLY…VFAF, and LLAW…GVIV.

Belongs to the PlsY family. In terms of assembly, probably interacts with PlsX.

It localises to the cell inner membrane. It catalyses the reaction an acyl phosphate + sn-glycerol 3-phosphate = a 1-acyl-sn-glycero-3-phosphate + phosphate. The protein operates within lipid metabolism; phospholipid metabolism. Its function is as follows. Catalyzes the transfer of an acyl group from acyl-phosphate (acyl-PO(4)) to glycerol-3-phosphate (G3P) to form lysophosphatidic acid (LPA). This enzyme utilizes acyl-phosphate as fatty acyl donor, but not acyl-CoA or acyl-ACP. This chain is Glycerol-3-phosphate acyltransferase, found in Azotobacter vinelandii (strain DJ / ATCC BAA-1303).